We begin with the raw amino-acid sequence, 276 residues long: Nickel import system permease protein NikC (276 aa).

Helical transmembrane passes span 10–30 (LIFF…FFVS), 73–93 (LFVT…LGLF), 108–128 (FIDV…ASFF), 186–206 (IIPA…LYIS), and 238–258 (IMLI…NLTG). The ABC transmembrane type-1 domain occupies 69–258 (ARSTLFVTVL…ITILIFNLTG (190 aa)).

The protein belongs to the binding-protein-dependent transport system permease family. OppBC subfamily. As to quaternary structure, the complex is composed of two ATP-binding proteins (NikD and NikE), two transmembrane proteins (NikB and NikC) and a solute-binding protein (NikA).

The protein resides in the cell membrane. In terms of biological role, part of the ABC transporter complex NikABCDE (Opp2) involved in nickel import. Probably responsible for the translocation of the substrate across the membrane. The polypeptide is Nickel import system permease protein NikC (Staphylococcus aureus (strain USA300)).